A 144-amino-acid chain; its full sequence is UPF0102 protein BURPS668_3819 (144 aa).

Positions 1 to 28 (MCHAREASLGTGEPEAAPRDNFPREAGS) are disordered. The segment covering 16-28 (AAPRDNFPREAGS) has biased composition (basic and acidic residues).

This sequence belongs to the UPF0102 family.

This chain is UPF0102 protein BURPS668_3819, found in Burkholderia pseudomallei (strain 668).